Consider the following 270-residue polypeptide: tRNA pseudouridine synthase A (270 aa).

Aspartate 60 acts as the Nucleophile in catalysis. The interval 107 to 111 (FHARF) is RNA binding. Tyrosine 118 is a substrate binding site. The segment at 168-172 (QCQSR) is interaction with tRNA.

Belongs to the tRNA pseudouridine synthase TruA family. Homodimer.

It carries out the reaction uridine(38/39/40) in tRNA = pseudouridine(38/39/40) in tRNA. In terms of biological role, formation of pseudouridine at positions 38, 39 and 40 in the anticodon stem and loop of transfer RNAs. This Shigella sonnei (strain Ss046) protein is tRNA pseudouridine synthase A.